Here is a 1962-residue protein sequence, read N- to C-terminus: PIII-type proteinase (1962 aa).

Positions 1–33 (MQRKKKGLSILLAGTVALGALAVLPVGEIQAKA) are cleaved as a signal peptide. A propeptide spanning residues 34 to 187 (AISQQTKGSS…VTLAKVYYPT (154 aa)) is cleaved from the precursor. The 507-residue stretch at 191-697 (ANSMANVQAV…AGLVDVKAAI (507 aa)) folds into the Peptidase S8 domain. Active-site charge relay system residues include aspartate 217, histidine 281, and serine 620. The tract at residues 1796 to 1938 (GKGDGTTGTS…KTGETTERPA (143 aa)) is disordered. Gly residues predominate over residues 1797–1812 (KGDGTTGTSDKGGGQG). 2 stretches are compositionally biased toward polar residues: residues 1856 to 1865 (RNGQLTSGTS) and 1890 to 1903 (SQPSSGGNIPTNPA). An LPXTG sorting signal motif is present at residues 1927-1931 (LPKTG). A Pentaglycyl murein peptidoglycan amidated threonine modification is found at threonine 1930. Residues 1931–1962 (GETTERPAFGFLGVIVVSLMGVLGLKRKQREE) constitute a propeptide, removed by sortase.

Belongs to the peptidase S8 family.

The protein resides in the secreted. It localises to the cell wall. The enzyme catalyses Endopeptidase activity with very broad specificity, although some subsite preference have been noted, e.g. large hydrophobic residues in the P1 and P4 positions, and Pro in the P2 position. Best known for its action on caseins, although it has been shown to hydrolyze hemoglobin and oxidized insulin B-chain.. Functionally, protease which breaks down milk proteins during the growth of the bacteria on milk. This Lactococcus lactis subsp. cremoris (strain SK11) protein is PIII-type proteinase (prtP).